A 372-amino-acid polypeptide reads, in one-letter code: Enoyl-[acyl-carrier-protein] reductase, mitochondrial (372 aa).

A mitochondrion-targeting transit peptide spans 1 to 18; it reads MSFFKTAVRRFSSTSITR. The Proton donor role is filled by Y72. NADP(+) contacts are provided by residues N157, 183–186, 206–208, 279–282, 304–306, and K365; these read NSMV, RNR, FGGM, and FWV.

This sequence belongs to the zinc-containing alcohol dehydrogenase family. Quinone oxidoreductase subfamily. As to quaternary structure, homodimer.

It localises to the mitochondrion matrix. It carries out the reaction a 2,3-saturated acyl-[ACP] + NADP(+) = a (2E)-enoyl-[ACP] + NADPH + H(+). Functionally, catalyzes the NADPH-dependent reduction of trans-2-enoyl thioesters in mitochondrial fatty acid synthesis (fatty acid synthesis type II). Fatty acid chain elongation in mitochondria uses acyl carrier protein (ACP) as an acyl group carrier, but the enzyme accepts both ACP and CoA thioesters as substrates in vitro. Required for respiration and the maintenance of the mitochondrial compartment. The chain is Enoyl-[acyl-carrier-protein] reductase, mitochondrial (etr1) from Schizosaccharomyces pombe (strain 972 / ATCC 24843) (Fission yeast).